The primary structure comprises 595 residues: Putative lipase atg15 (595 aa).

Topologically, residues Met-1 to Asp-20 are cytoplasmic. Residues Leu-21–Gly-41 form a helical; Signal-anchor for type II membrane protein membrane-spanning segment. At Ser-42–Phe-595 the chain is on the lumenal side. Residues Asn-164, Asn-199, Asn-221, Asn-279, and Asn-303 are each glycosylated (N-linked (GlcNAc...) asparagine). Residue Ser-319 is the Charge relay system of the active site. An N-linked (GlcNAc...) asparagine glycan is attached at Asn-465.

The protein belongs to the AB hydrolase superfamily. Lipase family. As to quaternary structure, binds to both phosphatidylinositol (PI) and phosphatidylinositol 3,5-bisphosphate (PIP2).

Its subcellular location is the endosome. The protein resides in the multivesicular body membrane. It localises to the prevacuolar compartment membrane. The catalysed reaction is a triacylglycerol + H2O = a diacylglycerol + a fatty acid + H(+). Functionally, lipase which is essential for lysis of subvacuolar cytoplasm to vacuole targeted bodies and intravacuolar autophagic bodies. Involved in the lysis of intravacuolar multivesicular body (MVB) vesicles. The intravacuolar membrane disintegration by atg15 is critical to life span extension. The chain is Putative lipase atg15 (atg15) from Aspergillus niger (strain ATCC MYA-4892 / CBS 513.88 / FGSC A1513).